The following is a 428-amino-acid chain: MEILMASSNLIKQLQERGLVAQVTDEEALAERLAQGPIALYCGFDPTADSLHLGHLVPLLCLKRFQQAGHKPVALVGGATGLIGDPSFKAAERKLNTEDTVQEWVDKIRKQVAPFLDFDCGDNSAIAANNYDWFGGMNVLTFLRDIGKHFSVNQMINKEAVKQRLNRDDQGISFTEFSYNLLQGYDFACLNKLHGVTLQIGGSDQWGNITSGIDLTRRLHQNQVFGLTVPLITKADGTKFGKTEGGAVWLDPKKTSPYKFYQFWINTADADVYRFLKFFTFMDIAEINALEEEDKNSGKAPRAQYVLAEQVTRLVHGEEGLVAAKRITESLFNGNLSDLSEADFEQLAQDGVPMIEMEKGADLMQALVDSELQPSRGQARKTIASNAVTINGEKQSDPEYFFQDSDILFGRYTLLRRGKKNYCLICWK.

Tyr-41 provides a ligand contact to L-tyrosine. Residues 46 to 55 carry the 'HIGH' region motif; sequence PTADSLHLGH. Residues Tyr-179 and Gln-183 each coordinate L-tyrosine. Positions 239 to 243 match the 'KMSKS' region motif; the sequence is KFGKT. Position 242 (Lys-242) interacts with ATP. The 58-residue stretch at 361–418 folds into the S4 RNA-binding domain; sequence ADLMQALVDSELQPSRGQARKTIASNAVTINGEKQSDPEYFFQDSDILFGRYTLLRRG.

The protein belongs to the class-I aminoacyl-tRNA synthetase family. TyrS type 1 subfamily. As to quaternary structure, homodimer.

Its subcellular location is the cytoplasm. It carries out the reaction tRNA(Tyr) + L-tyrosine + ATP = L-tyrosyl-tRNA(Tyr) + AMP + diphosphate + H(+). Catalyzes the attachment of tyrosine to tRNA(Tyr) in a two-step reaction: tyrosine is first activated by ATP to form Tyr-AMP and then transferred to the acceptor end of tRNA(Tyr). This is Tyrosine--tRNA ligase from Citrobacter koseri (strain ATCC BAA-895 / CDC 4225-83 / SGSC4696).